Here is a 26-residue protein sequence, read N- to C-terminus: Hemocyanin subunit 3 (26 aa).

Belongs to the tyrosinase family. Hemocyanin subfamily. Hemolymph.

The protein localises to the secreted. It localises to the extracellular space. Functionally, hemocyanins are copper-containing oxygen carriers occurring freely dissolved in the hemolymph of many mollusks and arthropods. This chain is Hemocyanin subunit 3, found in Homarus americanus (American lobster).